A 157-amino-acid polypeptide reads, in one-letter code: Transcriptional repressor NrdR (157 aa).

Residues 3-34 fold into a zinc finger; the sequence is CPFCGHEDTQVKDSRPTDDGTAIRRRRSCTAC. Residues 49-139 enclose the ATP-cone domain; sequence LIVVKTDQRR…VYRNFSDAGD (91 aa).

It belongs to the NrdR family. Requires Zn(2+) as cofactor.

In terms of biological role, negatively regulates transcription of bacterial ribonucleotide reductase nrd genes and operons by binding to NrdR-boxes. The polypeptide is Transcriptional repressor NrdR (Granulibacter bethesdensis (strain ATCC BAA-1260 / CGDNIH1)).